The following is a 270-amino-acid chain: MLITPDISALSYKRQLAKRFDRASQSYDSYADFQKVVLERLLAMLPLNQADVVLDLGTGTGQALGILSERLNPKCNIALDLSLQMLAVASERFSSLHNTHYVCADAERLPLQDRSCDLVFSSLAIQWCLSPLDLFKELYRVIKPGGYVVFSTLSQGSMPEISKAWFGLDNKEHVHQYMASDALLDSIRASELNLLSSQLSNISMWFDSPESAIYSLKKVGASLIASDGDPSVSPSKWKAFLLEYEKQRNELGIPLSYQVSFVVAQRPNSI.

It belongs to the methyltransferase superfamily.

It carries out the reaction malonyl-[ACP] + S-adenosyl-L-methionine = malonyl-[ACP] methyl ester + S-adenosyl-L-homocysteine. It participates in cofactor biosynthesis; biotin biosynthesis. Its function is as follows. Converts the free carboxyl group of a malonyl-thioester to its methyl ester by transfer of a methyl group from S-adenosyl-L-methionine (SAM). It allows to synthesize pimeloyl-ACP via the fatty acid synthetic pathway. In Marinomonas sp. (strain MWYL1), this protein is Malonyl-[acyl-carrier protein] O-methyltransferase.